Here is a 241-residue protein sequence, read N- to C-terminus: Peroxisomal membrane protein 11C (241 aa).

The Cytoplasmic segment spans residues Met1–Arg124. The chain crosses the membrane as a helical span at residues Trp125 to Leu149. Residues Lys150 to Pro211 lie on the Lumenal side of the membrane. A helical transmembrane segment spans residues Trp212–Tyr227. Residues Gln228–Pro241 are Cytoplasmic-facing.

The protein belongs to the peroxin-11 family. In terms of assembly, homodimer. Heterodimer with either PEX11A or PEX11B. Interacts with FIS1.

It is found in the peroxisome membrane. Promotes membrane protrusion and elongation on the peroxisomal surface. The polypeptide is Peroxisomal membrane protein 11C (PEX11G) (Homo sapiens (Human)).